Here is a 332-residue protein sequence, read N- to C-terminus: Malate dehydrogenase, cytoplasmic (332 aa).

Residues 16 to 17, Asp43, and Gly90 each bind NAD(+); that span reads QI. Arg99 lines the oxaloacetate pocket. NAD(+) contacts are provided by Gln113 and Asn132. Residues Asn132, Arg163, His188, and Ser243 each contribute to the oxaloacetate site. The active-site Proton acceptor is His188.

It belongs to the LDH/MDH superfamily. MDH type 2 family. In terms of assembly, homodimer.

It is found in the cytoplasm. It carries out the reaction (S)-malate + NAD(+) = oxaloacetate + NADH + H(+). The chain is Malate dehydrogenase, cytoplasmic (NR1) from Beta vulgaris (Sugar beet).